The sequence spans 92 residues: Acylphosphatase (92 aa).

One can recognise an Acylphosphatase-like domain in the interval 5–92 (RVHIIVSGLV…TSCREFRILT (88 aa)). Residues Arg-20 and Asn-38 contribute to the active site.

Belongs to the acylphosphatase family.

The enzyme catalyses an acyl phosphate + H2O = a carboxylate + phosphate + H(+). This is Acylphosphatase (acyP) from Chlorobaculum tepidum (strain ATCC 49652 / DSM 12025 / NBRC 103806 / TLS) (Chlorobium tepidum).